A 66-amino-acid chain; its full sequence is ATP synthase F(0) complex subunit 8 (66 aa).

A helical transmembrane segment spans residues 8–24; the sequence is IWLLAVVIVLTTLMIFL. Lys54 carries the post-translational modification N6-acetyllysine; alternate. N6-succinyllysine; alternate is present on Lys54. The residue at position 57 (Lys57) is an N6-acetyllysine.

Belongs to the ATPase protein 8 family. Component of the ATP synthase complex composed at least of ATP5F1A/subunit alpha, ATP5F1B/subunit beta, ATP5MC1/subunit c (homooctomer), MT-ATP6/subunit a, MT-ATP8/subunit 8, ATP5ME/subunit e, ATP5MF/subunit f, ATP5MG/subunit g, ATP5MK/subunit k, ATP5MJ/subunit j, ATP5F1C/subunit gamma, ATP5F1D/subunit delta, ATP5F1E/subunit epsilon, ATP5PF/subunit F6, ATP5PB/subunit b, ATP5PD/subunit d, ATP5PO/subunit OSCP. ATP synthase complex consists of a soluble F(1) head domain (subunits alpha(3) and beta(3)) - the catalytic core - and a membrane F(0) domain - the membrane proton channel (subunits c, a, 8, e, f, g, k and j). These two domains are linked by a central stalk (subunits gamma, delta, and epsilon) rotating inside the F1 region and a stationary peripheral stalk (subunits F6, b, d, and OSCP). Interacts with PRICKLE3.

It localises to the mitochondrion membrane. In terms of biological role, subunit 8, of the mitochondrial membrane ATP synthase complex (F(1)F(0) ATP synthase or Complex V) that produces ATP from ADP in the presence of a proton gradient across the membrane which is generated by electron transport complexes of the respiratory chain. ATP synthase complex consist of a soluble F(1) head domain - the catalytic core - and a membrane F(1) domain - the membrane proton channel. These two domains are linked by a central stalk rotating inside the F(1) region and a stationary peripheral stalk. During catalysis, ATP synthesis in the catalytic domain of F(1) is coupled via a rotary mechanism of the central stalk subunits to proton translocation. In vivo, can only synthesize ATP although its ATP hydrolase activity can be activated artificially in vitro. Part of the complex F(0) domain. The polypeptide is ATP synthase F(0) complex subunit 8 (Loxodonta africana (African elephant)).